The sequence spans 276 residues: U6 snRNA phosphodiesterase 1 (276 aa).

The interval 1-58 (MIVNYSSSSSEEESGSSSSPSGKRQKLDTETSEALDHGSAQRKVCKSSHLTPRLPLPE) is disordered. His-131 serves as the catalytic Proton acceptor. Residues 131–133 (HLS), Tyr-213, and 215–221 (DPSFHIS) each bind AMP. Residues Tyr-213 and 217-221 (SFHIS) contribute to the UMP site. His-219 (proton donor) is an active-site residue.

It belongs to the 2H phosphoesterase superfamily. USB1 family.

Its subcellular location is the nucleus. The catalysed reaction is a 3'-end uridylyl-uridine-RNA = a 3'-end 2',3'-cyclophospho-uridine-RNA + uridine. The enzyme catalyses a 3'-end uridylyl-adenosine-RNA = a 3'-end 2',3'-cyclophospho-uridine-RNA + adenosine. In terms of biological role, 3'-5' RNA exonuclease that trims the 3' end of oligo(U) and oligo(A) tracts of the pre-U6 small nuclear RNA (snRNA) molecule, leading to the formation of a mature U6 snRNA 3' end-terminated with a 2',3'-cyclic phosphate. Participates in the U6 snRNA 3' end processing that prevents U6 snRNA degradation. In addition also removes uridines from the 3' end of U6atac snRNA and possibly the vault RNA VTRNA1-1. This chain is U6 snRNA phosphodiesterase 1, found in Danio rerio (Zebrafish).